The following is a 215-amino-acid chain: Leucyl/phenylalanyl-tRNA--protein transferase (215 aa).

This sequence belongs to the L/F-transferase family.

The protein resides in the cytoplasm. It catalyses the reaction N-terminal L-lysyl-[protein] + L-leucyl-tRNA(Leu) = N-terminal L-leucyl-L-lysyl-[protein] + tRNA(Leu) + H(+). It carries out the reaction N-terminal L-arginyl-[protein] + L-leucyl-tRNA(Leu) = N-terminal L-leucyl-L-arginyl-[protein] + tRNA(Leu) + H(+). The enzyme catalyses L-phenylalanyl-tRNA(Phe) + an N-terminal L-alpha-aminoacyl-[protein] = an N-terminal L-phenylalanyl-L-alpha-aminoacyl-[protein] + tRNA(Phe). Its function is as follows. Functions in the N-end rule pathway of protein degradation where it conjugates Leu, Phe and, less efficiently, Met from aminoacyl-tRNAs to the N-termini of proteins containing an N-terminal arginine or lysine. This chain is Leucyl/phenylalanyl-tRNA--protein transferase, found in Campylobacter jejuni subsp. jejuni serotype O:2 (strain ATCC 700819 / NCTC 11168).